We begin with the raw amino-acid sequence, 1488 residues long: MAGNSLVLPIVLWGRKAPTHCISSILLTDDGGTIVTGCHDGQICLWDLSEELEVNPRALLFGHTAAITCLSKACASGDKQYTVSASANGEMCLWDVNDGRCIEFTKLACTHTGIQFYQFSVGNQREGRLLCHGHYPEILVVDATSLEVLYSLVSKISPDWISSMSIIRSHRTQEDTVVALSVTGILKVWIVTSEISGLQDTEPIFEEESKPIYCQNCQSLSFCAFTQRSLLVVCSKYWRVFDAGDYSLLCSGPSEDGQTWTGGDFVSADKVIIWTENGQSYIYKLPASCLPASDSFRSDVGKAVENLIPPVQHSLLDQKDRELVICPPVTRFFYGCKEYLHKLLIQGDSSGRLSIWNIADIADKQEANEGLKTTTCISLQDAFDKLKPCPAGIIDQLSVIPNSNEPLKVTASVYIPAHGRLVCGREDGSIIIVPATQTAIVQLLQGEHMLRRGWPPHRTLRGHRNKVTCLLYPHQVSARYDQRYLISGGVDFSVIIWDIFSGEMKHIFCVHGGEITQLLVPPENCSARVQHCVCSVASDHSVGLLSLREKKCIMLASRHLFPIQVIKWRPSDDYLVVGCTDGSVCVWQMDTGALDRCAMGITAVEILNACDEAVPAAVDSLSHPAVNLKQAMTRRSLAALKNMAHHKLQTLATNLLASEASDKGNLPKYSHNSLMVQAIKTNLTDPDIHVLFFDVEALIIQLLTEEASRPNTALISPENLQKASGSSDKGGSFLTGKRAAVLFQQVKETIKENIKEHLLDEEEDEEEVMRQRREESDPEYRASKSKPLTLLEYNLTMDTAKLFMSCLHAWGLNEVLDEVCLDRLGMLKPHCTVSFGLLSRGGHMSLMLPGYNQAAGKLLQAKAEAGRKGPATESVGKGTYTVSRAVTTQHLLSIISLANTLMSMTNATFIGDHMKKGPTRPPRPGTPDLSKARDSPPASSNIVQGQIKQAAAPVSARSAADHSGSASASPALRTCFLVNEGWSQLAAMHCVMLPDLLGLGKFRPPLLEMLARRWQDRCLEVREAAQALLLAELRRIEQAGRKETIDTWAPYLPQYMDHVISPGVTAEAMQTMAAAPDASGPEAKVQEEEHDLVDDDITTGCLSSVPQMKKMSTSYEERRKQATAIVLLGVIGAEFGAEIEPPKLLTRPRSSSQIPEGFGLTSGGSNYSLARHTCKALTFLLLQPPSPKLPPHSTIRRTAIDLIGRGFTVWEPYMDVSAVLMGLLELCADAEKQLANITMGLPLSPAADSARSARHALSLIATARPPAFITTIAKEVHRHTALAANTQSQQSIHTTTLARAKGEILRVIEILIEKMPTDVVDLLVEVMDIIMYCLEGSLVKKKGLQECFPAICRFYMVSYYERSHRIAVGARHGSVALYDIRTGKCQTIHGHKGPITAVSFAPDGRYLATYSNTDSHISFWQMNTSLLGSIGMLNSAPQLRCIKTYQVPPVQPASPGSHNALRLARLIWTSNRNVILMAHDGKEHRFMV.

7 WD repeats span residues 17–56, 62–104, 156–199, 324–366, 404–443, 462–507, and 558–597; these read APTH…EVNP, GHTA…CIEF, ISPD…SGLQ, VICP…DKQE, NEPL…IVQL, GHRN…MKHI, and RHLF…LDRC. 2 disordered regions span residues 761–781 and 911–947; these read EEED…PEYR and GDHM…QGQI. A compositionally biased stretch (basic and acidic residues) spans 768–781; sequence VMRQRREESDPEYR. S935 is modified (phosphoserine). The segment covering 937–947 has biased composition (polar residues); the sequence is PASSNIVQGQI. WD repeat units lie at residues 1349–1388 and 1390–1430; these read PAIC…CQTI and GHKG…LGSI. S1454 carries the phosphoserine modification.

This chain is WD repeat-containing protein 7 (Wdr7), found in Rattus norvegicus (Rat).